The chain runs to 156 residues: MSRKHSAPIRKVLADPVFNSVLVTKLINAIMLDGKKSLAQDILYSAFNLVKEKTQKDPMEVFQAAIDNVTPQLEVRTRRIGGTNYQVPTEVSARRKQTLALRWLVQYARLRNEKTMDVRLANEIIDASNKTGGAIKKREDTHKMAEANRAFAHFRW.

It belongs to the universal ribosomal protein uS7 family. In terms of assembly, part of the 30S ribosomal subunit. Contacts proteins S9 and S11.

Its function is as follows. One of the primary rRNA binding proteins, it binds directly to 16S rRNA where it nucleates assembly of the head domain of the 30S subunit. Is located at the subunit interface close to the decoding center, probably blocks exit of the E-site tRNA. The sequence is that of Small ribosomal subunit protein uS7 from Mycoplasmopsis agalactiae (strain NCTC 10123 / CIP 59.7 / PG2) (Mycoplasma agalactiae).